Reading from the N-terminus, the 279-residue chain is Diaminopimelate epimerase (279 aa).

Substrate is bound by residues Asn-11 and Asn-64. The active-site Proton donor is the Cys-73. Substrate is bound by residues 74-75 (GN), Asn-170, and 187-188 (ER). Residue Cys-196 is the Proton acceptor of the active site. 197-198 (GS) is a substrate binding site. Residues 255–279 (NTDHQRRRHSLSRSPSGRPRLQECR) form a disordered region.

The protein belongs to the diaminopimelate epimerase family. As to quaternary structure, homodimer.

It localises to the cytoplasm. The catalysed reaction is (2S,6S)-2,6-diaminopimelate = meso-2,6-diaminopimelate. It participates in amino-acid biosynthesis; L-lysine biosynthesis via DAP pathway; DL-2,6-diaminopimelate from LL-2,6-diaminopimelate: step 1/1. Catalyzes the stereoinversion of LL-2,6-diaminopimelate (L,L-DAP) to meso-diaminopimelate (meso-DAP), a precursor of L-lysine. In Methanopyrus kandleri (strain AV19 / DSM 6324 / JCM 9639 / NBRC 100938), this protein is Diaminopimelate epimerase.